A 727-amino-acid polypeptide reads, in one-letter code: Glycerol-3-phosphate dehydrogenase, mitochondrial (727 aa).

A mitochondrion-targeting transit peptide spans 1–42; sequence MAFQKAVKGTILVGGGALATVLGLSPFAHYRRKQVSLAYVEA. An FAD-binding site is contributed by 71 to 99; sequence DILVIGGGATGCGCALDAVTRGLKTALVE. At Tyr601 the chain carries Phosphotyrosine. 2 consecutive EF-hand domains span residues 623 to 658 and 659 to 694; these read SDID…INVQ and MDEN…VQKG. Ca(2+) is bound by residues Asp672, Asn674, Asn676, Gln678, and Glu683.

This sequence belongs to the FAD-dependent glycerol-3-phosphate dehydrogenase family. Requires FAD as cofactor.

The protein resides in the mitochondrion inner membrane. The catalysed reaction is a quinone + sn-glycerol 3-phosphate = dihydroxyacetone phosphate + a quinol. It functions in the pathway polyol metabolism; glycerol degradation via glycerol kinase pathway; glycerone phosphate from sn-glycerol 3-phosphate (anaerobic route): step 1/1. Calcium-binding enhance the activity of the enzyme. Its function is as follows. Calcium-responsive mitochondrial glycerol-3-phosphate dehydrogenase which seems to be a key component of the pancreatic beta-cell glucose-sensing device. The polypeptide is Glycerol-3-phosphate dehydrogenase, mitochondrial (Mus musculus (Mouse)).